We begin with the raw amino-acid sequence, 280 residues long: Pantothenate synthetase (280 aa).

Residue 30–37 participates in ATP binding; that stretch reads MGYLHEGH. Catalysis depends on histidine 37, which acts as the Proton donor. Residue glutamine 61 coordinates (R)-pantoate. Residue glutamine 61 participates in beta-alanine binding. 147–150 contacts ATP; it reads GQKD. Glutamine 153 serves as a coordination point for (R)-pantoate. ATP contacts are provided by residues valine 176 and 184–187; that span reads MSSR.

Belongs to the pantothenate synthetase family. In terms of assembly, homodimer.

It is found in the cytoplasm. The catalysed reaction is (R)-pantoate + beta-alanine + ATP = (R)-pantothenate + AMP + diphosphate + H(+). It participates in cofactor biosynthesis; (R)-pantothenate biosynthesis; (R)-pantothenate from (R)-pantoate and beta-alanine: step 1/1. Catalyzes the condensation of pantoate with beta-alanine in an ATP-dependent reaction via a pantoyl-adenylate intermediate. This chain is Pantothenate synthetase, found in Fervidobacterium nodosum (strain ATCC 35602 / DSM 5306 / Rt17-B1).